Consider the following 426-residue polypeptide: Serine hydroxymethyltransferase (426 aa).

(6S)-5,6,7,8-tetrahydrofolate is bound by residues Leu-111 and 115–117 (GHL). An N6-(pyridoxal phosphate)lysine modification is found at Lys-220.

The protein belongs to the SHMT family. As to quaternary structure, homodimer. Requires pyridoxal 5'-phosphate as cofactor.

The protein resides in the cytoplasm. It catalyses the reaction (6R)-5,10-methylene-5,6,7,8-tetrahydrofolate + glycine + H2O = (6S)-5,6,7,8-tetrahydrofolate + L-serine. The protein operates within one-carbon metabolism; tetrahydrofolate interconversion. It participates in amino-acid biosynthesis; glycine biosynthesis; glycine from L-serine: step 1/1. In terms of biological role, catalyzes the reversible interconversion of serine and glycine with tetrahydrofolate (THF) serving as the one-carbon carrier. This reaction serves as the major source of one-carbon groups required for the biosynthesis of purines, thymidylate, methionine, and other important biomolecules. Also exhibits THF-independent aldolase activity toward beta-hydroxyamino acids, producing glycine and aldehydes, via a retro-aldol mechanism. This is Serine hydroxymethyltransferase from Orientia tsutsugamushi (strain Ikeda) (Rickettsia tsutsugamushi).